We begin with the raw amino-acid sequence, 482 residues long: uncharacterized protein (482 aa).

WD repeat units lie at residues 92–133 (DMPN…REPI) and 191–230 (GHEH…CLCK).

Its subcellular location is the cytoplasm. The protein resides in the nucleus. This is an uncharacterized protein from Schizosaccharomyces pombe (strain 972 / ATCC 24843) (Fission yeast).